Reading from the N-terminus, the 228-residue chain is MSYVFVNDSSQTNVPLLQACIDGDFNYSKRLLESGFDPNIRDSRGRTGLHLAAARGNVDICQLLHKFGADLLATDYQGNTALHLCGHVDTIQFLVSNGLKIDICNHQGATPLVLAKRRGVNKDVIRLLESLEEQEVKGFNRGTHSKLETMQTAESESAMESHSLLNPNLQQGEGVLSSFRTTWQEFVEDLGFWRVLLLIFVIALLSLGIAYYVSGVLPFVENQPELVH.

ANK repeat units lie at residues 11-40 (QTNV…DPNI), 44-73 (RGRT…DLLA), 77-103 (QGNT…KIDI), and 107-138 (QGAT…EVKG). Residues 195–215 (VLLLIFVIALLSLGIAYYVSG) traverse the membrane as a helical segment.

It localises to the membrane. The sequence is that of Ankyrin repeat domain-containing protein 46 (ANKRD46) from Bos taurus (Bovine).